The following is a 702-amino-acid chain: MQSINQYVWIIPLLPCLTAVILGLGLISTKNATKSQRLGSAILSIGALLVTMLLSITVLWEQVISDSAYRQLVSWIKVDNLFLEIGCLVDPLSAIMLVLVTTVGVLVMIYTHGYMSHDQGYVRFFAYLSLFTASMLGLVLSPNLVQVYAFWELVGMCSYLLVGFWFTRPSAAYACQKAFITNRVGDFGLLLGILALYWLTGSLEFDIVASRAHQLLVENSANTVLLTVCCVLLFLGPIAKSAQFPLHVWLPDAMEGPTPISALIHAATMVAAGVYLVARLLPLFQEVPLVMDIVAWTGGITAVLGATVALAQKDLKKGLAYSTMSQLGYMILALGVGSYQAGLFHLITHAYSKALLFLGSGSVIHGIEPVVGYNPNQSQNMTYMGGLRSYMPITGVTFLIGTLSLCGVPPFACFWSKDEILADAWHKLPVLGLLAWLTAGLTAFYMFRMYFITFEGTFRGSSLISNKSSKQTLSVNKMDSVFALSNQTKDNTSLKASKHLDPHESSNAMTIPLIVLTIPTILIGFIGAPLPNGLTGSSLLSHWLYLDNTEIVELSTNGWTEFAITALPSVSIGILGAFIAWIVYGPHVDRLKNNPVSIDPSAEGWTGILLNSIYNWSLRRAYIDEIYDQTFVWATRSSANALAWFDQWTIDGIVNVGGLFTLLGGEGTRYTESGRTSAYIFVLGIGLVFVMIAAVLFNFFHL.

A run of 16 helical transmembrane segments spans residues 7 to 27 (YVWIIPLLPCLTAVILGLGLI), 40 to 60 (SAILSIGALLVTMLLSITVLW), 91 to 111 (PLSAIMLVLVTTVGVLVMIYT), 124 to 144 (FFAYLSLFTASMLGLVLSPNL), 147 to 167 (VYAFWELVGMCSYLLVGFWFT), 189 to 209 (LLLGILALYWLTGSLEFDIVA), 224 to 244 (VLLTVCCVLLFLGPIAKSAQF), 258 to 278 (TPISALIHAATMVAAGVYLVA), 289 to 309 (LVMDIVAWTGGITAVLGATVA), 327 to 347 (LGYMILALGVGSYQAGLFHLI), 354 to 374 (ALLFLGSGSVIHGIEPVVGYN), 395 to 415 (GVTFLIGTLSLCGVPPFACFW), 427 to 447 (KLPVLGLLAWLTAGLTAFYMF), 511 to 531 (IPLIVLTIPTILIGFIGAPLP), 562 to 582 (FAITALPSVSIGILGAFIAWI), and 680 to 700 (IFVLGIGLVFVMIAAVLFNFF).

It belongs to the complex I subunit 5 family. As to quaternary structure, NDH is composed of at least 16 different subunits, 5 of which are encoded in the nucleus.

The protein resides in the plastid. It localises to the chloroplast thylakoid membrane. It catalyses the reaction a plastoquinone + NADH + (n+1) H(+)(in) = a plastoquinol + NAD(+) + n H(+)(out). The catalysed reaction is a plastoquinone + NADPH + (n+1) H(+)(in) = a plastoquinol + NADP(+) + n H(+)(out). In terms of biological role, NDH shuttles electrons from NAD(P)H:plastoquinone, via FMN and iron-sulfur (Fe-S) centers, to quinones in the photosynthetic chain and possibly in a chloroplast respiratory chain. The immediate electron acceptor for the enzyme in this species is believed to be plastoquinone. Couples the redox reaction to proton translocation, and thus conserves the redox energy in a proton gradient. The sequence is that of NAD(P)H-quinone oxidoreductase subunit 5, chloroplastic (ndhF) from Zygnema circumcarinatum (Green alga).